A 169-amino-acid polypeptide reads, in one-letter code: Large ribosomal subunit protein uL10 (169 aa).

Belongs to the universal ribosomal protein uL10 family. As to quaternary structure, part of the ribosomal stalk of the 50S ribosomal subunit. The N-terminus interacts with L11 and the large rRNA to form the base of the stalk. The C-terminus forms an elongated spine to which L12 dimers bind in a sequential fashion forming a multimeric L10(L12)X complex.

Forms part of the ribosomal stalk, playing a central role in the interaction of the ribosome with GTP-bound translation factors. The chain is Large ribosomal subunit protein uL10 from Rickettsia peacockii (strain Rustic).